The following is a 120-amino-acid chain: Large ribosomal subunit protein bL19 (120 aa).

Belongs to the bacterial ribosomal protein bL19 family.

Its function is as follows. This protein is located at the 30S-50S ribosomal subunit interface and may play a role in the structure and function of the aminoacyl-tRNA binding site. This chain is Large ribosomal subunit protein bL19, found in Microcystis aeruginosa (strain NIES-843 / IAM M-2473).